A 135-amino-acid chain; its full sequence is RxLR effector protein Avr10 (135 aa).

The N-terminal stretch at Met-1–Ala-19 is a signal peptide. A compositionally biased stretch (polar residues) spans Gly-34–Lys-43. The interval Gly-34–Ala-64 is disordered. Residues Arg-44–Arg-63 carry the RxLR-dEER motif. Over residues Leu-46–Ala-55 the composition is skewed to basic and acidic residues.

The protein belongs to the RxLR effector family.

The protein resides in the secreted. It is found in the host nucleus. Its subcellular location is the host cytoplasm. Its function is as follows. Secreted effector that acts as an elicitor of hypersensitive response (HR) specifically on plants carrying defense protein R10. Enhances P.infestans colonization of Nicotiana benthamiana leaves. This Phytophthora infestans (strain T30-4) (Potato late blight agent) protein is RxLR effector protein Avr10.